Consider the following 369-residue polypeptide: MSRGQELVLLTGATGHVGYAVLVKTLQAGYNVRATLRDMSRADAILSSGPVQEALSAQDLDLSFVRVPNFTAPDAFGLVLSNVTHVVHVASALRRGTSTDLKEAIIDVAVQGTRNILRAAHNCPSVRRVVITSSVSAIVDQHPVVSQSPAGRCVTPLDRHADYDAEYYKGDSLKAYTAAKTAALNATDAFLATADGGPTTLPLHFDVINIMPSFVFGPKGLAATPSDVTNGSNIFGIGLVMRHKPWDGIRLEAVCCHVDDVAQVHVNALNDHELLPLKVGAHRDFILGVKFKPEEIGEIVRRRFPREWWESESATFGARGTYDWYHTDYDVGSAERLLGRPFKCLEEQIYDSGSQVMEMLKGMTTRSYN.

Tyrosine 176 is a binding site for NADP(+).

Belongs to the NAD(P)-dependent epimerase/dehydratase family. Dihydroflavonol-4-reductase subfamily.

The protein operates within mycotoxin biosynthesis. Its function is as follows. NAD-dependent epimerase/dehydratase; part of the gene cluster that mediates the biosynthesis of fumonisins B1 (FB1), B2 (FB2), B3 (FB3), and B4 (FB4), which are carcinogenic mycotoxins. Within the pathway, FUM13 stereospecifically reduces the intermediate 3-keto intermediate 2-amino-3-oxo-12,16-dimethylicosane to the 3-hydroxyl product 2-amino-3-hydroxy-12,16-dimethylicosane. The biosynthesis starts with the FUM1-catalyzed carbon chain assembly from one molecule of acetyl-CoA, eight molecules of malonyl-CoA, and two molecules of methionine (in S-adenosyl form). The C18 polyketide chain is released from the enzyme by a nucleophilic attack of a carbanion, which is derived from R-carbon of alanine by decarboxylation, on the carbonyl carbon of polyketide acyl chain. This step is catalyzed by the pyridoxal 5'-phosphate-dependent aminoacyl transferase FUM8. The resultant 3-keto intermediate is then stereospecifically reduced to a 3-hydroxyl product by reductase FUM13. Subsequent oxidations at C-10 by the cytochrome P450 monooxygenase FUM2, C-14 and C-15 by FUM6, FUM12 or FUM15, tricarballylic esterification of the hydroxyl groups on C-14 and C-15 by acyltransferase FUM14, and C-5 hydroxylation by 2-keto-glutarate-dependent dioxygenase FUM3 furnish the biosynthesis of fumonisins. The tricarballylic moieties are most likely derived from the citric acid cycle, and their addition to the carbon backbone may involve FUM7, FUM10, FUM11 and FUM14. In Gibberella moniliformis (strain M3125 / FGSC 7600) (Maize ear and stalk rot fungus), this protein is NAD-dependent epimerase/dehydratase FUM13.